Here is a 394-residue protein sequence, read N- to C-terminus: Argininosuccinate synthase (394 aa).

Residue 8–16 (AYSGGLDTS) coordinates ATP. Tyr86 and Ser91 together coordinate L-citrulline. Gly116 provides a ligand contact to ATP. Residues Thr118, Asn122, and Asp123 each contribute to the L-aspartate site. Residue Asn122 participates in L-citrulline binding. Residues Arg126, Ser172, Ser181, Glu256, and Tyr268 each contribute to the L-citrulline site.

It belongs to the argininosuccinate synthase family. Type 1 subfamily. In terms of assembly, homotetramer.

Its subcellular location is the cytoplasm. It catalyses the reaction L-citrulline + L-aspartate + ATP = 2-(N(omega)-L-arginino)succinate + AMP + diphosphate + H(+). Its pathway is amino-acid biosynthesis; L-arginine biosynthesis; L-arginine from L-ornithine and carbamoyl phosphate: step 2/3. In Methanococcoides burtonii (strain DSM 6242 / NBRC 107633 / OCM 468 / ACE-M), this protein is Argininosuccinate synthase.